The following is a 266-amino-acid chain: HTH-type transcriptional regulator MurR (266 aa).

Positions 1–77 constitute an HTH rpiR-type domain; it reads MLYLTKIRNA…MALIGEYSAS (77 aa). Positions 37-56 form a DNA-binding region, H-T-H motif; the sequence is SRQMAKQLGISQSSIVKFAQ. Residues 128 to 266 form the SIS domain; the sequence is IIEVISKAPF…LLFVGLVQHQ (139 aa).

In terms of assembly, homotetramer.

It participates in amino-sugar metabolism; N-acetylmuramate degradation [regulation]. Functionally, represses the expression of the murPQ operon involved in the uptake and degradation of N-acetylmuramic acid (MurNAc). Binds to two adjacent inverted repeats within the operator region. MurNAc 6-phosphate, the substrate of MurQ, is the specific inducer that weakens binding of MurR to the operator. In Shigella flexneri serotype 5b (strain 8401), this protein is HTH-type transcriptional regulator MurR.